The following is a 149-amino-acid chain: Succinate dehydrogenase assembly factor 2, mitochondrial (149 aa).

It belongs to the SDHAF2 family. Interacts with the flavoprotein subunit within the SDH catalytic dimer.

Its subcellular location is the mitochondrion matrix. Functionally, plays an essential role in the assembly of succinate dehydrogenase (SDH), an enzyme complex (also referred to as respiratory complex II) that is a component of both the tricarboxylic acid (TCA) cycle and the mitochondrial electron transport chain, and which couples the oxidation of succinate to fumarate with the reduction of ubiquinone (coenzyme Q) to ubiquinol. Required for flavinylation (covalent attachment of FAD) of the flavoprotein subunit of the SDH catalytic dimer. The protein is Succinate dehydrogenase assembly factor 2, mitochondrial of Scheffersomyces stipitis (strain ATCC 58785 / CBS 6054 / NBRC 10063 / NRRL Y-11545) (Yeast).